The chain runs to 153 residues: MFCTWDSWDTGTSRKSHSPHRNCLAVRFLQLPFSSFLPCVITYMKSWQTSIGDSEFPLTSFQILVTDAEVVVQRIFDCINGYLPGWHYRNTVFIEHTTSYHRSHFCIFVEGVWVCGEFVKKWFEIPFDNRIENYTKQFPWILIGFGNQVSKAL.

Functionally, involved in bud site selection. Required for resistance to the DNA-damaging agent methyl methanesulfonate (MMS). This is Bud site selection protein 25 from Saccharomyces cerevisiae (strain ATCC 204508 / S288c) (Baker's yeast).